The chain runs to 556 residues: Genetic interactor of prohibitins 3, mitochondrial (556 aa).

A mitochondrion-targeting transit peptide spans 1 to 21; it reads MLNLCHALRGVRQFSCSVIVK. Positions 113-305 constitute a CP-type G domain; that stretch reads ESTLNDILNY…LFDLPGYSTS (193 aa).

Belongs to the TRAFAC class YlqF/YawG GTPase family. GEP3 subfamily.

Its subcellular location is the mitochondrion. Functionally, interacts genetically with prohibitins and thus may be involved in the mitochondrial lipid metabolism. The chain is Genetic interactor of prohibitins 3, mitochondrial (GEP3) from Saccharomyces cerevisiae (strain AWRI1631) (Baker's yeast).